Consider the following 106-residue polypeptide: Large ribosomal subunit protein eL42 (106 aa).

This sequence belongs to the eukaryotic ribosomal protein eL42 family.

The protein is Large ribosomal subunit protein eL42 (RPL44) of Eremothecium gossypii (strain ATCC 10895 / CBS 109.51 / FGSC 9923 / NRRL Y-1056) (Yeast).